Reading from the N-terminus, the 213-residue chain is Kynurenine formamidase (213 aa).

Trp18 provides a ligand contact to substrate. Residues His48, His52, and Asp54 each contribute to the Zn(2+) site. His58 serves as the catalytic Proton donor/acceptor. Zn(2+) contacts are provided by His160 and Glu172.

Belongs to the Cyclase 1 superfamily. KynB family. Homodimer. Requires Zn(2+) as cofactor.

The catalysed reaction is N-formyl-L-kynurenine + H2O = L-kynurenine + formate + H(+). Its pathway is amino-acid degradation; L-tryptophan degradation via kynurenine pathway; L-kynurenine from L-tryptophan: step 2/2. Functionally, catalyzes the hydrolysis of N-formyl-L-kynurenine to L-kynurenine, the second step in the kynurenine pathway of tryptophan degradation. The sequence is that of Kynurenine formamidase from Burkholderia ambifaria (strain ATCC BAA-244 / DSM 16087 / CCUG 44356 / LMG 19182 / AMMD) (Burkholderia cepacia (strain AMMD)).